Reading from the N-terminus, the 366-residue chain is Tripartite motif-containing protein 54 (366 aa).

An RING-type zinc finger spans residues 26-82 (CPICLEMFSKPVVILPCQHNLCRKCANDVFQASNPLWQSRSSTTVSSGGRFRCPSCR). A B box-type zinc finger spans residues 121–163 (EQHLMCEEHEDEKINIYCLSCEVPTCSLCKVFGAHKDCEVAPL). C126, H129, C149, and H155 together coordinate Zn(2+). Residues 168–211 (KRQKSELSDGIAMLVAGNDRVQAVITQMEEVCQTIEENSRRQKQ) are mediates microtubule-binding and homooligomerization. The stretch at 185–258 (NDRVQAVITQ…LIRQYGDHLE (74 aa)) forms a coiled coil. Positions 271–329 (MEEPQMALYLQQAKELINKVGTMSKVELAGRPEPGYERMDQFTVSVEHVAEMLRTIDFQ) constitute a COS domain. Residues 326–366 (IDFQPGTSGEEEDEEVAVEGEEGNAGPEEERTDGRESTGQH) form a disordered region. The segment covering 334 to 347 (GEEEDEEVAVEGEE) has biased composition (acidic residues). The segment covering 353–366 (EEERTDGRESTGQH) has biased composition (basic and acidic residues).

Homooligomer and heterooligomer. Interacts with TRIM63 and probably with TRIM55. Interacts with tubulin.

It is found in the cytoplasm. The protein resides in the cytoskeleton. It localises to the myofibril. Its subcellular location is the sarcomere. The protein localises to the z line. May bind and stabilize microtubules during myotubes formation. The chain is Tripartite motif-containing protein 54 (TRIM54) from Bos taurus (Bovine).